Here is a 648-residue protein sequence, read N- to C-terminus: Threonine--tRNA ligase (648 aa).

The TGS domain occupies 1–61 (MIKITLPDGS…TTDGSLVLYT (61 aa)). Residues 240–539 (DHRKLGKELE…LLEHTAGNFP (300 aa)) form a catalytic region. Zn(2+) is bound by residues Cys335, His386, and His516.

It belongs to the class-II aminoacyl-tRNA synthetase family. Homodimer. Zn(2+) is required as a cofactor.

The protein localises to the cytoplasm. The catalysed reaction is tRNA(Thr) + L-threonine + ATP = L-threonyl-tRNA(Thr) + AMP + diphosphate + H(+). Its function is as follows. Catalyzes the attachment of threonine to tRNA(Thr) in a two-step reaction: L-threonine is first activated by ATP to form Thr-AMP and then transferred to the acceptor end of tRNA(Thr). Also edits incorrectly charged L-seryl-tRNA(Thr). This chain is Threonine--tRNA ligase, found in Flavobacterium psychrophilum (strain ATCC 49511 / DSM 21280 / CIP 103535 / JIP02/86).